A 125-amino-acid chain; its full sequence is Cu-Zn superoxide dismutase-like protein OPG175 (125 aa).

A disulfide bond links Cys52 and Cys102.

The protein belongs to the Cu-Zn superoxide dismutase family.

The protein localises to the virion. The protein resides in the host cytoplasm. Its function is as follows. Superoxide dismutase-like protein with no enzymatic activity. The polypeptide is Cu-Zn superoxide dismutase-like protein OPG175 (OPG175) (Monkeypox virus).